The chain runs to 852 residues: DNA polymerase kappa (852 aa).

In terms of domain architecture, UmuC spans 102–357 (IVHVDMDAFY…LPIRKVSGIG (256 aa)). The Mg(2+) site is built by D106 and D197. Positions 252-273 (FEDSPPDLQPQGSPFQLNSEEQ) are disordered. Residues 261 to 273 (PQGSPFQLNSEEQ) are compositionally biased toward polar residues. UBZ4-type zinc fingers lie at residues 619–649 (TFIC…DGPS) and 761–791 (ALVC…NKGI). C622, C625, H640, C644, C764, C767, H782, and C786 together coordinate Zn(2+). Residues 798–852 (SEGNSVKQPKESSRSTDRLQKASGRTKRPGTKTKSSTLKKTKPRDPRHTLDGFFK) form a disordered region. The segment covering 805–817 (QPKESSRSTDRLQ) has biased composition (basic and acidic residues). Residues 821-839 (GRTKRPGTKTKSSTLKKTK) show a composition bias toward basic residues. Residues 840-852 (PRDPRHTLDGFFK) are compositionally biased toward basic and acidic residues.

It belongs to the DNA polymerase type-Y family. In terms of assembly, interacts with PCNA. Interacts with REV1. Mg(2+) serves as cofactor. The cofactor is Mn(2+). As to expression, detected at low levels in heart, brain, lung, liver, kidney and testis.

It is found in the nucleus. The catalysed reaction is DNA(n) + a 2'-deoxyribonucleoside 5'-triphosphate = DNA(n+1) + diphosphate. Its function is as follows. DNA polymerase specifically involved in DNA repair. Plays an important role in translesion synthesis, where the normal high-fidelity DNA polymerases cannot proceed and DNA synthesis stalls. Depending on the context, it inserts the correct base, but causes frequent base transitions, transversions and frameshifts. Lacks 3'-5' proofreading exonuclease activity. Forms a Schiff base with 5'-deoxyribose phosphate at abasic sites, but does not have lyase activity. The chain is DNA polymerase kappa (Polk) from Mus musculus (Mouse).